Reading from the N-terminus, the 82-residue chain is UPF0410 protein YeaQ (82 aa).

Helical transmembrane passes span 26–46 (GGGFFMTILLGIVGAVVGGWI) and 57–77 (GFNFGSFVVAVIGAIVVLFIY).

The protein belongs to the UPF0410 family.

The protein resides in the cell inner membrane. This chain is UPF0410 protein YeaQ (yeaQ), found in Escherichia coli O157:H7.